We begin with the raw amino-acid sequence, 537 residues long: Small conductance calcium-activated potassium channel protein 1 (537 aa).

Over residues methionine 1–valine 10 the composition is skewed to polar residues. Residues methionine 1–leucine 90 are disordered. The span at glutamine 65–aspartate 76 shows a compositional bias: acidic residues. Residues leucine 108–valine 128 form a helical membrane-spanning segment. A helical membrane pass occupies residues phenylalanine 137–tyrosine 157. The helical transmembrane segment at isoleucine 176 to histidine 196 threads the bilayer. Residues valine 225–histidine 245 traverse the membrane as a helical segment. The chain crosses the membrane as a helical span at residues leucine 274 to alanine 294. Residues phenylalanine 314–valine 334 constitute an intramembrane region (pore-forming). The segment S6 stretch occupies residues valine 343–alanine 363. Residues aspartate 381 to isoleucine 460 are calmodulin-binding.

This sequence belongs to the potassium channel KCNN family. KCa2.1/KCNN1 subfamily. In terms of assembly, homodimer. Heteromultimer with KCNN2 and KCNN3. The complex is composed of 4 channel subunits each of which binds to a calmodulin subunit which regulates the channel activity through calcium-binding. Interacts with calmodulin. Highest expression in brain and liver with lower levels in heart, testis, kidney and colon. In colon, detected in smooth muscle cells. Expressed in atrial and ventricular myocytes with higher levels in atrial myocytes.

Its subcellular location is the membrane. The protein resides in the cytoplasm. It is found in the myofibril. It localises to the sarcomere. The protein localises to the z line. It carries out the reaction K(+)(in) = K(+)(out). Its activity is regulated as follows. Inhibited by bee venom neurotoxin apamin. Inhibited by d-tubocurarine and tetraethylammonium (TEA). Functionally, small conductance calcium-activated potassium channel that mediates the voltage-independent transmembrane transfer of potassium across the cell membrane through a constitutive interaction with calmodulin which binds the intracellular calcium allowing its opening. The current is characterized by a voltage-independent activation, an intracellular calcium concentration increase-dependent activation and a single-channel conductance of about 3 picosiemens. Also presents an inwardly rectifying current, thus reducing its already small outward conductance of potassium ions, which is particularly the case when the membrane potential displays positive values, above + 20 mV. Activation is followed by membrane hyperpolarization. Thought to regulate neuronal excitability by contributing to the slow component of synaptic afterhyperpolarization. This Mus musculus (Mouse) protein is Small conductance calcium-activated potassium channel protein 1.